Consider the following 179-residue polypeptide: ATP synthase subunit delta (179 aa).

This sequence belongs to the ATPase delta chain family. F-type ATPases have 2 components, F(1) - the catalytic core - and F(0) - the membrane proton channel. F(1) has five subunits: alpha(3), beta(3), gamma(1), delta(1), epsilon(1). F(0) has three main subunits: a(1), b(2) and c(10-14). The alpha and beta chains form an alternating ring which encloses part of the gamma chain. F(1) is attached to F(0) by a central stalk formed by the gamma and epsilon chains, while a peripheral stalk is formed by the delta and b chains.

It localises to the cell membrane. Its function is as follows. F(1)F(0) ATP synthase produces ATP from ADP in the presence of a proton or sodium gradient. F-type ATPases consist of two structural domains, F(1) containing the extramembraneous catalytic core and F(0) containing the membrane proton channel, linked together by a central stalk and a peripheral stalk. During catalysis, ATP synthesis in the catalytic domain of F(1) is coupled via a rotary mechanism of the central stalk subunits to proton translocation. Functionally, this protein is part of the stalk that links CF(0) to CF(1). It either transmits conformational changes from CF(0) to CF(1) or is implicated in proton conduction. This chain is ATP synthase subunit delta, found in Listeria innocua serovar 6a (strain ATCC BAA-680 / CLIP 11262).